The chain runs to 120 residues: Transcription elongation factor SPT4 (120 aa).

An interaction with spt-5 region spans residues 1 to 39; that stretch reads MSASVPADLRNLRACLLCSLVKSVESFQKEGCENCEDVL. Residues 15–35 form a C4-type zinc finger; that stretch reads CLLCSLVKSVESFQKEGCENC.

This sequence belongs to the SPT4 family. In terms of assembly, interacts with spt-5 to form DSIF. DSIF interacts with RNA polymerase II and with the positive transcription elongation factor b complex (P-TEFb complex), which is composed of cdk-9 and cyclin-T (cit-1.1 or cit-1.2).

The protein resides in the nucleus. In terms of biological role, may function as a component of the DRB sensitivity-inducing factor complex (DSIF complex), which regulates transcription elongation by RNA polymerase II. DSIF may enhance transcriptional pausing at sites proximal to the promoter, which may in turn facilitate the assembly of an elongation competent RNA polymerase II complex. The protein is Transcription elongation factor SPT4 (spt-4) of Caenorhabditis elegans.